The following is a 215-amino-acid chain: Oligoribonuclease (215 aa).

The region spanning 5 to 170 (LVWIDCEMTG…ADIHESIREL (166 aa)) is the Exonuclease domain. Residue Tyr-127 is part of the active site.

Belongs to the oligoribonuclease family.

Its subcellular location is the cytoplasm. 3'-to-5' exoribonuclease specific for small oligoribonucleotides. This chain is Oligoribonuclease, found in Mycobacterium ulcerans (strain Agy99).